We begin with the raw amino-acid sequence, 129 residues long: Follitropin subunit beta (129 aa).

Residues 1–19 (MKSVQFCFLFCCWRAICCR) form the signal peptide. 6 disulfide bridges follow: C21/C69, C35/C84, C38/C122, C46/C100, C50/C102, and C105/C112. N-linked (GlcNAc...) asparagine glycans are attached at residues N25 and N42.

This sequence belongs to the glycoprotein hormones subunit beta family. In terms of assembly, heterodimer. The active follitropin is a heterodimer composed of an alpha chain/CGA shared with other hormones and a unique beta chain/FSHB shown here.

It is found in the secreted. Functionally, together with the alpha chain CGA constitutes follitropin, the follicle-stimulating hormone, and provides its biological specificity to the hormone heterodimer. Binds FSHR, a G protein-coupled receptor, on target cells to activate downstream signaling pathways. Follitropin is involved in follicle development and spermatogenesis in reproductive organs. This is Follitropin subunit beta (FSHB) from Ovis aries (Sheep).